The primary structure comprises 463 residues: L-seryl-tRNA(Sec) selenium transferase (463 aa).

N6-(pyridoxal phosphate)lysine is present on Lys295.

It belongs to the SelA family. In terms of assembly, homodecamer; pentamer of dimers. Binds only one seryl-tRNA(Sec) per dimer. It depends on pyridoxal 5'-phosphate as a cofactor.

It is found in the cytoplasm. The catalysed reaction is L-seryl-tRNA(Sec) + selenophosphate + H(+) = L-selenocysteinyl-tRNA(Sec) + phosphate. It functions in the pathway aminoacyl-tRNA biosynthesis; selenocysteinyl-tRNA(Sec) biosynthesis; selenocysteinyl-tRNA(Sec) from L-seryl-tRNA(Sec) (bacterial route): step 1/1. Functionally, converts seryl-tRNA(Sec) to selenocysteinyl-tRNA(Sec) required for selenoprotein biosynthesis. This is L-seryl-tRNA(Sec) selenium transferase from Shigella boydii serotype 18 (strain CDC 3083-94 / BS512).